Consider the following 215-residue polypeptide: Transmembrane protein 267 (215 aa).

The next 3 membrane-spanning stretches (helical) occupy residues 77–97 (FGEV…HFFQ), 114–134 (FLHC…AVHL), and 178–198 (SSFY…LMYL).

Its subcellular location is the membrane. This Mus musculus (Mouse) protein is Transmembrane protein 267.